Here is a 305-residue protein sequence, read N- to C-terminus: 4-diphosphocytidyl-2-C-methyl-D-erythritol kinase (305 aa).

Lysine 15 is a catalytic residue. Position 99–109 (proline 99–serine 109) interacts with ATP. Residue aspartate 141 is part of the active site.

It belongs to the GHMP kinase family. IspE subfamily.

The catalysed reaction is 4-CDP-2-C-methyl-D-erythritol + ATP = 4-CDP-2-C-methyl-D-erythritol 2-phosphate + ADP + H(+). Its pathway is isoprenoid biosynthesis; isopentenyl diphosphate biosynthesis via DXP pathway; isopentenyl diphosphate from 1-deoxy-D-xylulose 5-phosphate: step 3/6. Its function is as follows. Catalyzes the phosphorylation of the position 2 hydroxy group of 4-diphosphocytidyl-2C-methyl-D-erythritol. The sequence is that of 4-diphosphocytidyl-2-C-methyl-D-erythritol kinase from Marinomonas sp. (strain MWYL1).